Here is a 256-residue protein sequence, read N- to C-terminus: Type III pantothenate kinase (256 aa).

6–13 (DCGNTNTV) serves as a coordination point for ATP. 107–110 (GPDR) serves as a coordination point for substrate. Catalysis depends on D109, which acts as the Proton acceptor. D129 is a binding site for K(+). T132 serves as a coordination point for ATP. A substrate-binding site is contributed by T184.

The protein belongs to the type III pantothenate kinase family. Homodimer. It depends on NH4(+) as a cofactor. K(+) is required as a cofactor.

It localises to the cytoplasm. The enzyme catalyses (R)-pantothenate + ATP = (R)-4'-phosphopantothenate + ADP + H(+). Its pathway is cofactor biosynthesis; coenzyme A biosynthesis; CoA from (R)-pantothenate: step 1/5. In terms of biological role, catalyzes the phosphorylation of pantothenate (Pan), the first step in CoA biosynthesis. The chain is Type III pantothenate kinase from Dinoroseobacter shibae (strain DSM 16493 / NCIMB 14021 / DFL 12).